Here is a 308-residue protein sequence, read N- to C-terminus: uncharacterized protein (308 aa).

This is an uncharacterized protein from Mycoplasmoides gallisepticum (strain R(low / passage 15 / clone 2)) (Mycoplasma gallisepticum).